The sequence spans 180 residues: dCTP deaminase (180 aa).

DCTP is bound by residues 101–106 (KSSFAR) and Asp-117. Glu-127 serves as the catalytic Proton donor/acceptor. DCTP-binding residues include Tyr-159 and Gln-168.

The protein belongs to the dCTP deaminase family. As to quaternary structure, homotrimer.

It catalyses the reaction dCTP + H2O + H(+) = dUTP + NH4(+). It participates in pyrimidine metabolism; dUMP biosynthesis; dUMP from dCTP (dUTP route): step 1/2. Catalyzes the deamination of dCTP to dUTP. This Ignicoccus hospitalis (strain KIN4/I / DSM 18386 / JCM 14125) protein is dCTP deaminase.